The following is a 193-amino-acid chain: 21 kDa protein (193 aa).

The first 22 residues, 1-22 (MKLSKSTLVFSALLVILAAASA), serve as a signal peptide directing secretion.

This Daucus carota (Wild carrot) protein is 21 kDa protein.